A 303-amino-acid polypeptide reads, in one-letter code: Thioesterase poxG (303 aa).

It belongs to the lcsJ thioesterase family.

Its pathway is secondary metabolite biosynthesis. In terms of biological role, thioesterase; part of the gene cluster that mediates the biosynthesis of oxaleimides, cytotoxic compounds containing an unusual disubstituted succinimide moiety. The first step of the pathway is provided by the HR-PKS poxF that serves in a new mode of collaborative biosynthesis with the PKS-NRPS poxE, by providing the olefin containing amino acid substrate via the synthesis of an ACP-bound dec-4-enoate. The cytochrome P450 monooxygenase poxM-catalyzed oxidation at the alpha-position creates the enzyme-bound 2-hydroxydec-4-enoyl-ACP thioester, which may be prone to spontaneous hydrolysis to yield 2-hydroxydec-4-enoic acid due to increased electrophilicity of the carbonyl. 2-hydroxydec-4-enoic acid can then be further oxidized by poxM to yield the alpha-ketoacid 2-oxodec-4-enoicacid, which is reductively aminated by the aminotransferase poxL to yield (S,E)-2-aminodec-4-enoic acid. The Hybrid PKS-NRPS synthetase poxE then performs condensation between the octaketide product of its PKS modules and the amino group of (S,E)-2-aminodec-4-enoic acid which is activated and incorporated by the adenylation domain. The resulting aminoacyl product can be cyclized by the Diels-Alderase PoxQ and reductively released by the reductive (R) domain of poxE to yield an aldehyde intermediate. The released aldehyde is then substrate for a Knoevenagel condensation by the hydrolyase poxO followed by an oxidation at the 5-position of the pyrrolidone ring. The presence of the olefin from the amino acid building block allows for migration of the substituted allyl group to occur. This allylic transposition reaction takes place in a conjugate addition, semipinacol-like fashion to yield a succinimide intermediate. Iterative two-electron oxidations of the C7 methyl of the succinimide intermediate to the carboxylic acid can be catalyzed by one of two remaining cytochrome P450 monooxygenasess poxC or poxD to yield oxaleimide A. Subsequent oxidation yields the maleimide scaffold oxaleimide I. Both oxaleimide A and oxaleimide I can undergo oxidative modifications in the decalin ring to yield the series of products oxaleimides B to H. This chain is Thioesterase poxG, found in Penicillium oxalicum.